Here is a 459-residue protein sequence, read N- to C-terminus: uncharacterized protein (459 aa).

At Lys-285 the chain carries N6-(pyridoxal phosphate)lysine.

Belongs to the class-III pyridoxal-phosphate-dependent aminotransferase family.

Its subcellular location is the cytoplasm. This is an uncharacterized protein from Schizosaccharomyces pombe (strain 972 / ATCC 24843) (Fission yeast).